Consider the following 281-residue polypeptide: Probable feruloyl esterase A (281 aa).

The N-terminal stretch at 1–21 is a signal peptide; it reads MKNFVSMHAILLACSAGAGLA. Disulfide bonds link cysteine 50–cysteine 279, cysteine 112–cysteine 115, and cysteine 248–cysteine 255. Residue aspartate 98 coordinates substrate. The N-linked (GlcNAc...) asparagine glycan is linked to asparagine 100. Tyrosine 101 contacts substrate. The Nucleophile role is filled by serine 154. The N-linked (GlcNAc...) asparagine glycan is linked to asparagine 173. The Charge relay system role is filled by aspartate 215. Residue histidine 268 participates in substrate binding. Residue histidine 268 is the Charge relay system of the active site.

Belongs to the AB hydrolase superfamily. FaeA family.

Its subcellular location is the secreted. It carries out the reaction feruloyl-polysaccharide + H2O = ferulate + polysaccharide.. Involved in degradation of plant cell walls. Hydrolyzes the feruloyl-arabinose ester bond in arabinoxylans, and the feruloyl-galactose ester bond in pectin. The protein is Probable feruloyl esterase A (faeA) of Aspergillus flavus (strain ATCC 200026 / FGSC A1120 / IAM 13836 / NRRL 3357 / JCM 12722 / SRRC 167).